Consider the following 473-residue polypeptide: Phosphatidylserine synthase 1 (473 aa).

An N-acetylalanine modification is found at A2. At 2–35 the chain is on the cytoplasmic side; that stretch reads ASCVGSRTLSKDDVNYKMHFRMINEQQVEDITID. Residues 36–56 form a helical membrane-spanning segment; it reads FFYRPHTITLLSFTIVSLMYF. Residues 57–72 are Lumenal-facing; it reads AFTRDDSVPEDNIWRG. The helical transmembrane segment at 73 to 93 threads the bilayer; that stretch reads ILSVIFFFLIISVLAFPNGPF. The Cytoplasmic segment spans residues 94–102; that stretch reads TRPHPALWR. A helical membrane pass occupies residues 103-123; it reads MVFGLSVLYFLFLVFLLFLNF. Residues 124 to 186 are Lumenal-facing; that stretch reads EQVKSLMYWL…AMKALLIRSY (63 aa). Residues 187-207 form a helical membrane-spanning segment; it reads GLCWTISITWELTELFFMHLL. The Cytoplasmic segment spans residues 208-216; it reads PNFAECWWD. A helical membrane pass occupies residues 217–237; sequence QVILDILLCNGGGIWLGMVVC. Topologically, residues 238 to 286 are lumenal; the sequence is RFLEMRTYHWASFKDIHTTTGKIKRAVLQFTPASWTYVRWFDPKSSFQR. The helical transmembrane segment at 287-307 threads the bilayer; that stretch reads VAGIYLFMIIWQLTELNTFFL. Residues 308 to 319 lie on the Cytoplasmic side of the membrane; it reads KHIFVFQASHPL. A helical transmembrane segment spans residues 320 to 342; that stretch reads SWCRILFIGGITAPTVRQYYAYL. Residues 343–355 lie on the Lumenal side of the membrane; sequence TDTQCKRVGTQCW. A helical transmembrane segment spans residues 356-376; sequence VFGVIGFLEAIVCIKFGQDLF. Residues 377–383 lie on the Cytoplasmic side of the membrane; sequence SKTQILY. Residues 384 to 404 form a helical membrane-spanning segment; that stretch reads VVLWLLCVAFTTFLCLYGMVW. Residues 405 to 473 lie on the Lumenal side of the membrane; that stretch reads YAEHYGHREK…SKVTNGVGKK (69 aa). S417, S425, and S454 each carry phosphoserine. The interval 427 to 473 is disordered; that stretch reads DISWPHGKGSKGSEDGPHKHPGNSESHSSRRRNRHSKSKVTNGVGKK. Positions 455–464 are enriched in basic residues; the sequence is SRRRNRHSKS.

The protein belongs to the phosphatidyl serine synthase family.

Its subcellular location is the endoplasmic reticulum membrane. It catalyses the reaction a 1,2-diacyl-sn-glycero-3-phosphoethanolamine + L-serine = a 1,2-diacyl-sn-glycero-3-phospho-L-serine + ethanolamine. The catalysed reaction is a 1,2-diacyl-sn-glycero-3-phosphocholine + L-serine = a 1,2-diacyl-sn-glycero-3-phospho-L-serine + choline. It participates in phospholipid metabolism; phosphatidylserine biosynthesis. Catalyzes a base-exchange reaction in which the polar head group of phosphatidylethanolamine (PE) or phosphatidylcholine (PC) is replaced by L-serine. Catalyzes mainly the conversion of phosphatidylcholine but also converts, in vitro and to a lesser extent, phosphatidylethanolamine. This is Phosphatidylserine synthase 1 (PTDSS1) from Bos taurus (Bovine).